The primary structure comprises 343 residues: N-acetyl-gamma-glutamyl-phosphate reductase (343 aa).

C146 is a catalytic residue.

The protein belongs to the NAGSA dehydrogenase family. Type 1 subfamily.

It localises to the cytoplasm. It carries out the reaction N-acetyl-L-glutamate 5-semialdehyde + phosphate + NADP(+) = N-acetyl-L-glutamyl 5-phosphate + NADPH + H(+). The protein operates within amino-acid biosynthesis; L-arginine biosynthesis; N(2)-acetyl-L-ornithine from L-glutamate: step 3/4. Its function is as follows. Catalyzes the NADPH-dependent reduction of N-acetyl-5-glutamyl phosphate to yield N-acetyl-L-glutamate 5-semialdehyde. The polypeptide is N-acetyl-gamma-glutamyl-phosphate reductase (Pseudarthrobacter chlorophenolicus (strain ATCC 700700 / DSM 12829 / CIP 107037 / JCM 12360 / KCTC 9906 / NCIMB 13794 / A6) (Arthrobacter chlorophenolicus)).